The following is a 247-amino-acid chain: Proteasome subunit alpha type-7-B (247 aa).

This sequence belongs to the peptidase T1A family. As to quaternary structure, the 26S proteasome consists of a 20S proteasome core and two 19S regulatory subunits. The 20S proteasome core is composed of 28 subunits that are arranged in four stacked rings, resulting in a barrel-shaped structure. The two end rings are each formed by seven alpha subunits, and the two central rings are each formed by seven beta subunits. The catalytic chamber with the active sites is on the inside of the barrel. In terms of processing, phosphorylated in G2 phase.

The protein resides in the cytoplasm. Its subcellular location is the nucleus. Functionally, the proteasome is a multicatalytic proteinase complex which is characterized by its ability to cleave peptides with Arg, Phe, Tyr, Leu, and Glu adjacent to the leaving group at neutral or slightly basic pH. The proteasome has an ATP-dependent proteolytic activity. This is Proteasome subunit alpha type-7-B (psma7-b) from Xenopus laevis (African clawed frog).